Reading from the N-terminus, the 239-residue chain is Small ribosomal subunit protein uS5 (239 aa).

The interval 1–62 is disordered; that stretch reads MADETEIQAA…DDRRGSEEQG (62 aa). Positions 9-19 are enriched in low complexity; it reads AAAPAEAAPGA. Residues 34–62 show a composition bias toward basic and acidic residues; it reads GGNDRGGDRGRGRDGRGRRDDRRGSEEQG. An S5 DRBM domain is found at 65–128; the sequence is LIEKLVHINR…AAAKKAMVRV (64 aa).

The protein belongs to the universal ribosomal protein uS5 family. As to quaternary structure, part of the 30S ribosomal subunit. Contacts proteins S4 and S8.

In terms of biological role, with S4 and S12 plays an important role in translational accuracy. Its function is as follows. Located at the back of the 30S subunit body where it stabilizes the conformation of the head with respect to the body. In Rhizorhabdus wittichii (strain DSM 6014 / CCUG 31198 / JCM 15750 / NBRC 105917 / EY 4224 / RW1) (Sphingomonas wittichii), this protein is Small ribosomal subunit protein uS5.